The following is a 248-amino-acid chain: 3-deoxy-manno-octulosonate cytidylyltransferase (248 aa).

The protein belongs to the KdsB family.

The protein resides in the cytoplasm. It carries out the reaction 3-deoxy-alpha-D-manno-oct-2-ulosonate + CTP = CMP-3-deoxy-beta-D-manno-octulosonate + diphosphate. The protein operates within nucleotide-sugar biosynthesis; CMP-3-deoxy-D-manno-octulosonate biosynthesis; CMP-3-deoxy-D-manno-octulosonate from 3-deoxy-D-manno-octulosonate and CTP: step 1/1. Its pathway is bacterial outer membrane biogenesis; lipopolysaccharide biosynthesis. Functionally, activates KDO (a required 8-carbon sugar) for incorporation into bacterial lipopolysaccharide in Gram-negative bacteria. The chain is 3-deoxy-manno-octulosonate cytidylyltransferase from Shigella dysenteriae serotype 1 (strain Sd197).